The chain runs to 142 residues: Large ribosomal subunit protein uL11 (142 aa).

This sequence belongs to the universal ribosomal protein uL11 family. In terms of assembly, part of the ribosomal stalk of the 50S ribosomal subunit. Interacts with L10 and the large rRNA to form the base of the stalk. L10 forms an elongated spine to which L12 dimers bind in a sequential fashion forming a multimeric L10(L12)X complex. Post-translationally, one or more lysine residues are methylated.

Functionally, forms part of the ribosomal stalk which helps the ribosome interact with GTP-bound translation factors. The protein is Large ribosomal subunit protein uL11 of Nitrobacter hamburgensis (strain DSM 10229 / NCIMB 13809 / X14).